Here is a 1258-residue protein sequence, read N- to C-terminus: Phosphatidylinositol 3,4,5-trisphosphate 5-phosphatase 2 (1258 aa).

The 97-residue stretch at 21-117 (WYHRDLSRAA…GLVCALLLPV (97 aa)) folds into the SH2 domain. Over residues 119-132 (GEREPDPPDDRDAS) the composition is skewed to basic and acidic residues. A disordered region spans residues 119–180 (GEREPDPPDD…AESAPNGLST (62 aa)). Ser-132 is subject to Phosphoserine. Residues 145–155 (SGSTSISAPTG) are compositionally biased toward polar residues. Over residues 156–166 (PSSPLPAPETP) the composition is skewed to pro residues. Thr-165 is subject to Phosphothreonine. A phosphoserine mark is found at Ser-241 and Ser-352. Phosphotyrosine is present on Tyr-886. Ser-890 is subject to Phosphoserine. A disordered region spans residues 897–1118 (GAKSKAPSVS…FLGEVASGDD (222 aa)). Positions 938 to 950 (PPPTGRPPAPPRA) are enriched in pro residues. The short motif at 944 to 949 (PPAPPR) is the SH3-binding element. Residues 951–965 (APREEPLTPRLKPEG) show a composition bias toward basic and acidic residues. Thr-958 is subject to Phosphothreonine. Residues 983–986 (NPAY) carry the NPXY motif motif. At Tyr-986 the chain carries Phosphotyrosine; by SRC. Pro residues-rich tracts occupy residues 996 to 1007 (LLPPEPPSPARA), 1048 to 1059 (LPPPDFPPPPLP), and 1087 to 1104 (GPPP…PGPS). Ser-1131 is modified (phosphoserine). A phosphotyrosine mark is found at Tyr-1135 and Tyr-1162. One can recognise an SAM domain in the interval 1196 to 1258 (LGEAGMSAWL…LLLDTLQLSK (63 aa)). Ser-1257 is modified (phosphoserine).

Belongs to the inositol 1,4,5-trisphosphate 5-phosphatase family. Interacts with tyrosine phosphorylated form of SHC1. Interacts with EGFR. Upon stimulation by the EGF signaling pathway, it forms a complex with SHC1 and EGFR. Interacts with cytoskeletal protein SORBS3/vinexin, promoting its localization to the periphery of cells. Forms a complex with filamin (FLNA or FLNB), actin, GPIb (GP1BA or GP1BB) that regulates cortical and submembraneous actin. Interacts with c-Met/MET, when c-Met/MET is phosphorylated on 'Tyr-1356'. Interacts with p130Cas/BCAR1. Interacts with CENTD3/ARAP3 via its SAM domain. Interacts with c-Cbl/CBL and CAP/SORBS1. Interacts with activated EPHA2 receptor. Interacts with receptor FCGR2A. Interacts with receptor FCGR2B. Interacts with tyrosine kinase ABL1. Interacts with tyrosine kinase TEC. Interacts with CSF1R. Interacts (via N-terminus) with SH3YL1 (via SH3 domain). Interacts with FCRL6 (tyrosine phosphorylated form). Interacts (via SH2 domain) with tyrosine phosphorylated KLRC1 (via ITIM). Interacts with NEDD9/HEF1. In terms of processing, tyrosine phosphorylated by the members of the SRC family after exposure to a diverse array of extracellular stimuli such as insulin, growth factors such as EGF or PDGF, chemokines, integrin ligands and hypertonic and oxidative stress. May be phosphorylated upon IgG receptor FCGR2B-binding. Phosphorylated at Tyr-986 following cell attachment and spreading. Phosphorylated at Tyr-1162 following EGF signaling pathway stimulation. Phosphorylated at Thr-958 in response to PDGF. As to expression, widely expressed, most prominently in skeletal muscle, heart and brain. Present in platelets. Expressed in transformed myeloid cells and in primary macrophages, but not in peripheral blood monocytes.

It is found in the cytoplasm. The protein localises to the cytosol. Its subcellular location is the cytoskeleton. It localises to the membrane. The protein resides in the cell projection. It is found in the filopodium. The protein localises to the lamellipodium. Its subcellular location is the basal cell membrane. It localises to the nucleus. The protein resides in the nucleus speckle. It is found in the spindle pole. The catalysed reaction is a 1,2-diacyl-sn-glycero-3-phospho-(1D-myo-inositol-3,4,5-trisphosphate) + H2O = a 1,2-diacyl-sn-glycero-3-phospho-(1D-myo-inositol-3,4-bisphosphate) + phosphate. It carries out the reaction 1,2-dioctanoyl-sn-glycero-3-phospho-(1D-myo-inositol-3,4,5-trisphosphate) + H2O = 1,2-dioctanoyl-sn-glycero-3-phospho-(1D-myo-inositol-3,4-bisphosphate) + phosphate. The enzyme catalyses 1,2-dihexadecanoyl-sn-glycero-3-phospho-(1D-myo-inositol-3,4,5-trisphosphate) + H2O = 1,2-dihexadecanoyl-sn-glycero-3-phospho-(1D-myo-inositol-3,4-bisphosphate) + phosphate. With respect to regulation, activated upon translocation to the sites of synthesis of PtdIns(3,4,5)P3 in the membrane. Enzymatic activity is enhanced in the presence of phosphatidylserine. Phosphatidylinositol (PtdIns) phosphatase that specifically hydrolyzes the 5-phosphate of phosphatidylinositol-3,4,5-trisphosphate (PtdIns(3,4,5)P3) to produce PtdIns(3,4)P2, thereby negatively regulating the PI3K (phosphoinositide 3-kinase) pathways. Required for correct mitotic spindle orientation and therefore progression of mitosis. Plays a central role in regulation of PI3K-dependent insulin signaling, although the precise molecular mechanisms and signaling pathways remain unclear. While overexpression reduces both insulin-stimulated MAP kinase and Akt activation, its absence does not affect insulin signaling or GLUT4 trafficking. Confers resistance to dietary obesity. May act by regulating AKT2, but not AKT1, phosphorylation at the plasma membrane. Part of a signaling pathway that regulates actin cytoskeleton remodeling. Required for the maintenance and dynamic remodeling of actin structures as well as in endocytosis, having a major impact on ligand-induced EGFR internalization and degradation. Participates in regulation of cortical and submembraneous actin by hydrolyzing PtdIns(3,4,5)P3 thereby regulating membrane ruffling. Regulates cell adhesion and cell spreading. Required for HGF-mediated lamellipodium formation, cell scattering and spreading. Acts as a negative regulator of EPHA2 receptor endocytosis by inhibiting via PI3K-dependent Rac1 activation. Acts as a regulator of neuritogenesis by regulating PtdIns(3,4,5)P3 level and is required to form an initial protrusive pattern, and later, maintain proper neurite outgrowth. Acts as a negative regulator of the FC-gamma-RIIA receptor (FCGR2A). Mediates signaling from the FC-gamma-RIIB receptor (FCGR2B), playing a central role in terminating signal transduction from activating immune/hematopoietic cell receptor systems. Involved in EGF signaling pathway. Upon stimulation by EGF, it is recruited by EGFR and dephosphorylates PtdIns(3,4,5)P3. Plays a negative role in regulating the PI3K-PKB pathway, possibly by inhibiting PKB activity. Down-regulates Fc-gamma-R-mediated phagocytosis in macrophages independently of INPP5D/SHIP1. In macrophages, down-regulates NF-kappa-B-dependent gene transcription by regulating macrophage colony-stimulating factor (M-CSF)-induced signaling. Plays a role in the localization of AURKA and NEDD9/HEF1 to the basolateral membrane at interphase in polarized cysts, thereby mediates cell cycle homeostasis, cell polarization and cilia assembly. Additionally promotion of cilia growth is also facilitated by hydrolysis of (PtdIns(3,4,5)P3) to PtdIns(3,4)P2. Promotes formation of apical membrane-initiation sites during the initial stages of lumen formation via Rho family-induced actin filament organization and CTNNB1 localization to cell-cell contacts. May also hydrolyze PtdIns(1,3,4,5)P4, and could thus affect the levels of the higher inositol polyphosphates like InsP6. Involved in endochondral ossification. This chain is Phosphatidylinositol 3,4,5-trisphosphate 5-phosphatase 2, found in Homo sapiens (Human).